A 153-amino-acid polypeptide reads, in one-letter code: MLTFDEAAEGLYVAAKYSELTLDAIEMLQRELKVPNPVPREKIHSTICYSRVMVPYSVASGSFEVATSGHLEVWNHGSSPLLVLVLDSDYLRCRHQYARAIGATHDFQDYTPHITLSYNVGVLKYPKEKYPIRVVLDREYKEPLKLDWADDLK.

Residue Y12 participates in 3',3'-cGAMP binding. Y12 is a 3',3'-cUAMP binding site. Active-site residues include H44, T46, H113, and T115. 3',3'-cGAMP contacts are provided by E142 and W148. Residues E142 and W148 each coordinate 3',3'-cUAMP.

It belongs to the anti-CBASS protein Acb1 family.

It catalyses the reaction 3',3'-cUAMP + H2O = U[3'-5']pAp[3'] + H(+). It carries out the reaction 3',3',3'-c-tri-AMP + H2O = A[3'-5']pA[3'-5']pAp[3'] + H(+). The catalysed reaction is 3',3',3'-cAAG + H2O = G[3'-5']pA[3'-5']pAp[3'] + H(+). The enzyme catalyses 3',3',3'-cAAG + H2O = A[3'-5']pG[3'-5']pAp[3'] + H(+). It catalyses the reaction 3',3'-cGAMP + H2O = G[3'-5']pAp[3'] + H(+). Functionally, counteracts the host CBASS antiviral defense system. Phosphodiesterase that enables metal-independent hydrolysis of the host cyclic di- and trinucleotide CBASS signals such as 3'3'-cGAMP, 3'3'cUA, and 3'3'3'-cAAA. Does not cleave cGG or cA4. Besides evasion of the CBASS system, might also enable evasion of the type III CRISPR systems that use cA3 signals. The sequence is that of Anti-CBASS protein Acb1 from Yersinia enterocolitica.